The chain runs to 119 residues: Large ribosomal subunit protein bL17 (119 aa).

The protein belongs to the bacterial ribosomal protein bL17 family. As to quaternary structure, part of the 50S ribosomal subunit. Contacts protein L32.

The chain is Large ribosomal subunit protein bL17 from Ureaplasma parvum serovar 3 (strain ATCC 27815 / 27 / NCTC 11736).